The chain runs to 587 residues: Glucosylglycerate phosphorylase (587 aa).

Residue aspartate 236 is the Nucleophile of the active site.

Belongs to the glycosyl hydrolase 13 family. Glucosylglycerate phosphorylase subfamily.

It carries out the reaction (2R)-2-O-(alpha-D-glucopyranosyl)-glycerate + phosphate = (R)-glycerate + alpha-D-glucose 1-phosphate. Functionally, catalyzes the reversible phosphorolysis of glucosylglycerate into alpha-D-glucose 1-phosphate (Glc1P) and D-glycerate. May be a regulator of intracellular levels of glucosylglycerate, a compatible solute that primarily protects organisms facing salt stress and very specific nutritional constraints. Cannot catalyze the phosphorolysis of sucrose. The protein is Glucosylglycerate phosphorylase of Spirochaeta thermophila (strain ATCC 700085 / DSM 6578 / Z-1203).